A 129-amino-acid chain; its full sequence is NADH-quinone oxidoreductase subunit A (129 aa).

The next 3 membrane-spanning stretches (helical) occupy residues 14–34 (LAIHVALSAGIVAAIIVVAAW), 67–87 (FLIAALFVIFDMEAAILFAWA), and 95–115 (WLGLIEAAVFIGVLLLALVYL).

The protein belongs to the complex I subunit 3 family. NDH-1 is composed of 14 different subunits. Subunits NuoA, H, J, K, L, M, N constitute the membrane sector of the complex.

Its subcellular location is the cell inner membrane. It catalyses the reaction a quinone + NADH + 5 H(+)(in) = a quinol + NAD(+) + 4 H(+)(out). In terms of biological role, NDH-1 shuttles electrons from NADH, via FMN and iron-sulfur (Fe-S) centers, to quinones in the respiratory chain. The immediate electron acceptor for the enzyme in this species is believed to be ubiquinone. Couples the redox reaction to proton translocation (for every two electrons transferred, four hydrogen ions are translocated across the cytoplasmic membrane), and thus conserves the redox energy in a proton gradient. The sequence is that of NADH-quinone oxidoreductase subunit A from Rhodopseudomonas palustris (strain ATCC BAA-98 / CGA009).